We begin with the raw amino-acid sequence, 238 residues long: tRNA (guanine-N(7)-)-methyltransferase (238 aa).

Positions 68, 93, 120, and 143 each coordinate S-adenosyl-L-methionine. Asp-143 is a catalytic residue. Residues Lys-147, Asp-179, and 216–219 each bind substrate; that span reads TKFE.

This sequence belongs to the class I-like SAM-binding methyltransferase superfamily. TrmB family.

It catalyses the reaction guanosine(46) in tRNA + S-adenosyl-L-methionine = N(7)-methylguanosine(46) in tRNA + S-adenosyl-L-homocysteine. It functions in the pathway tRNA modification; N(7)-methylguanine-tRNA biosynthesis. Catalyzes the formation of N(7)-methylguanine at position 46 (m7G46) in tRNA. The polypeptide is tRNA (guanine-N(7)-)-methyltransferase (Shewanella baltica (strain OS223)).